Here is a 347-residue protein sequence, read N- to C-terminus: Heat-inducible transcription repressor HrcA (347 aa).

This sequence belongs to the HrcA family.

Functionally, negative regulator of class I heat shock genes (grpE-dnaK-dnaJ and groELS operons). Prevents heat-shock induction of these operons. The polypeptide is Heat-inducible transcription repressor HrcA (Laribacter hongkongensis (strain HLHK9)).